A 411-amino-acid polypeptide reads, in one-letter code: Adherens junction-associated protein 1 (411 aa).

The N-terminal stretch at methionine 1–alanine 43 is a signal peptide. At leucine 44 to glutamine 282 the chain is on the extracellular side. 3 disordered regions span residues isoleucine 89–alanine 108, alanine 115–phenylalanine 197, and serine 239–proline 268. Over residues alanine 115–proline 146 the composition is skewed to low complexity. Over residues serine 166 to threonine 178 the composition is skewed to polar residues. The span at proline 247–glycine 263 shows a compositional bias: low complexity. The helical transmembrane segment at isoleucine 283–leucine 303 threads the bilayer. The targeting signals stretch occupies residues leucine 303–cysteine 411. Topologically, residues lysine 304 to cysteine 411 are cytoplasmic. The interval glycine 311–glutamine 330 is disordered.

Forms a complex with CDH1 and CTNNB1; interacts directly with CTNNB1. Interacts with AP1M2. Interacts with isoform 2 of BSG/CD147. Thr-237 and Ser-239 may be phosphorylated; however as this position is probably extracellular, the in vivo relevance is not proven. As to expression, expressed in uterus and pancreas (at protein level).

The protein resides in the basolateral cell membrane. The protein localises to the apical cell membrane. It localises to the cell junction. Its subcellular location is the adherens junction. In terms of biological role, plays a role in cell adhesion and cell migration. The sequence is that of Adherens junction-associated protein 1 (AJAP1) from Homo sapiens (Human).